A 177-amino-acid polypeptide reads, in one-letter code: Transcription termination/antitermination protein NusG (177 aa).

The region spanning 125 to 150 (EGENVRITEGPFANFTAIVEEYDMVR) is the KOW domain.

It belongs to the NusG family.

Participates in transcription elongation, termination and antitermination. The protein is Transcription termination/antitermination protein NusG of Campylobacter jejuni subsp. jejuni serotype O:2 (strain ATCC 700819 / NCTC 11168).